The following is a 152-amino-acid chain: Natriuretic peptides A (152 aa).

The first 24 residues, M1–A24, serve as a signal peptide directing secretion. 2 propeptides span residues N25–R122 and D92–D102. A disordered region spans residues D54–S104. Position 128 is a phosphoserine (S128). C129 and C145 are oxidised to a cystine. The tract at residues N146–Y150 is important for degradation of atrial natriuretic peptide by IDE.

Belongs to the natriuretic peptide family. Homodimer; disulfide-linked antiparallel dimer. The precursor molecule is proteolytically cleaved by CORIN at Arg-122 to produce the atrial natriuretic peptide. Undergoes further proteolytic cleavage by unknown proteases to give rise to long-acting natriuretic peptide, vessel dilator and kaliuretic peptide. Additional processing gives rise to the auriculin and atriopeptin peptides. In the kidneys, alternative processing by an unknown protease results in the peptide urodilatin. In terms of processing, cleavage by MME initiates degradation of the factor and thereby regulates its activity. Degradation by IDE results in reduced activation of NPR1 (in vitro). During IDE degradation, the resulting products can temporarily stimulate NPR2 to produce cGMP, before the fragments are completely degraded and inactivated by IDE (in vitro). Post-translationally, degraded by IDE. Phosphorylation on Ser-128 decreases vasorelaxant activity. High levels of expression in the atria compared to the ventricles. Very low levels of expression detected in extracardiac tissues such as the brain, hypothalamus, pituitary, lung and aorta. As to expression, atria (at protein level). In terms of tissue distribution, high levels of expression in the atria with very low levels of expression in the ventricles (at protein level). Relatively low levels of expression detected in the brain compared to the atria (at protein level).

It is found in the secreted. The protein resides in the perikaryon. It localises to the cell projection. In terms of biological role, hormone that plays a key role in mediating cardio-renal homeostasis, and is involved in vascular remodeling and regulating energy metabolism. Acts by specifically binding and stimulating NPR1 to produce cGMP, which in turn activates effector proteins, such as PRKG1, that drive various biological responses. Regulates vasodilation, natriuresis, diuresis and aldosterone synthesis and is therefore essential for regulating blood pressure, controlling the extracellular fluid volume and maintaining the fluid-electrolyte balance. Also involved in inhibiting cardiac remodeling and cardiac hypertrophy by inducing cardiomyocyte apoptosis and attenuating the growth of cardiomyocytes and fibroblasts. Plays a role in female pregnancy by promoting trophoblast invasion and spiral artery remodeling in uterus, and thus prevents pregnancy-induced hypertension. In adipose tissue, acts in various cGMP- and PKG-dependent pathways to regulate lipid metabolism and energy homeostasis. This includes up-regulating lipid metabolism and mitochondrial oxygen utilization by activating the AMP-activated protein kinase (AMPK), and increasing energy expenditure by acting via MAPK11 to promote the UCP1-dependent thermogenesis of brown adipose tissue. Binds the clearance receptor NPR3 which removes the hormone from circulation. Its function is as follows. May have a role in cardio-renal homeostasis through regulation of natriuresis, diuresis, vasodilation, and inhibiting aldosterone synthesis. In vitro, promotes the production of cGMP and induces vasodilation. May promote natriuresis, at least in part, by enhancing prostaglandin E2 synthesis resulting in the inhibition of renal Na+-K+-ATPase. However reports on the involvement of this peptide in mammal blood volume and blood pressure homeostasis are conflicting; according to a report, in vivo it is not sufficient to activate cGMP and does not inhibit collecting duct transport nor effect diuresis and natriuresis. Appears to bind to specific receptors that are distinct from the receptors bound by atrial natriuretic peptide and vessel dilator. Possibly enhances protein excretion in urine by decreasing proximal tubular protein reabsorption. May have a role in cardio-renal homeostasis through regulation of natriuresis, diuresis, and vasodilation. In vitro, promotes the production of cGMP and induces vasodilation. May promote natriuresis, at least in part, by enhancing prostaglandin E2 synthesis resulting in the inhibition of renal Na+-K+-ATPase. However reports on the involvement of this peptide in mammal blood volume and blood pressure homeostasis are conflicting; according to a report, in vivo it is not sufficient to activate cGMP and does not inhibit collecting duct transport nor effect diuresis and natriuresis. Appears to bind to specific receptors that are distinct from the receptors bound by the atrial natriuretic and long-acting natriuretic peptides. Possibly functions in protein excretion in urine by maintaining the integrity of the proximal tubules and enhancing protein excretion by decreasing proximal tubular protein reabsorption. Functionally, may have a role in cardio-renal homeostasis through regulation of diuresis and inhibiting aldosterone synthesis. In vitro, promotes the production of cGMP and induces vasodilation. May promote natriuresis, at least in part, by enhancing prostaglandin E2 synthesis resulting in the inhibition of renal Na+-K+-ATPase. May have a role in potassium excretion but not sodium excretion (natriuresis). Possibly enhances protein excretion in urine by decreasing proximal tubular protein reabsorption. In terms of biological role, hormone produced in the kidneys that appears to be important for maintaining cardio-renal homeostasis. Mediates vasodilation, natriuresis and diuresis primarily in the renal system, in order to maintain the extracellular fluid volume and control the fluid-electrolyte balance. Specifically binds and stimulates cGMP production by renal transmembrane receptors, likely NPR1. Urodilatin not ANP, may be the natriuretic peptide responsible for the regulation of sodium and water homeostasis in the kidney. Its function is as follows. May have a role in cardio-renal homeostasis through regulation of natriuresis and vasodilation. In vivo promotes natriuresis and in vitro, vasodilates renal artery strips. May have a role in cardio-renal homeostasis through regulation of regulation of natriuresis and vasodilation. In vivo promotes natriuresis. In vitro, vasodilates intestinal smooth muscle but not smooth muscle strips. Functionally, may have a role in cardio-renal homeostasis through regulation of natriuresis and vasodilation. In vivo promotes natriuresis. In vitro, selectively vasodilates intestinal and vascular smooth muscle strips. In terms of biological role, may have a role in cardio-renal homeostasis through regulation of natriuresis and vasodilation. In vivo promotes natriuresis. In vitro, selectively vasodilates intestinal smooth muscle but not vascular smooth muscle strips. This chain is Natriuretic peptides A (Nppa), found in Rattus norvegicus (Rat).